The primary structure comprises 347 residues: Holliday junction branch migration complex subunit RuvB (347 aa).

Residues 1–186 are large ATPase domain (RuvB-L); that stretch reads MKDENSINFL…FGITARFELY (186 aa). ATP contacts are provided by residues Leu-25, Arg-26, Gly-67, Lys-70, Thr-71, Thr-72, 133 to 135, Arg-176, Tyr-186, and Arg-223; that span reads EDY. Mg(2+) is bound at residue Thr-71. The interval 187-257 is small ATPAse domain (RuvB-S); sequence SEIELVEIIK…IVAIGLEMLR (71 aa). Residues 260-347 form a head domain (RuvB-H) region; the sequence is GEGLDEQDRN…NLNENQRVSF (88 aa). DNA contacts are provided by Arg-315 and Arg-320.

The protein belongs to the RuvB family. Homohexamer. Forms an RuvA(8)-RuvB(12)-Holliday junction (HJ) complex. HJ DNA is sandwiched between 2 RuvA tetramers; dsDNA enters through RuvA and exits via RuvB. An RuvB hexamer assembles on each DNA strand where it exits the tetramer. Each RuvB hexamer is contacted by two RuvA subunits (via domain III) on 2 adjacent RuvB subunits; this complex drives branch migration. In the full resolvosome a probable DNA-RuvA(4)-RuvB(12)-RuvC(2) complex forms which resolves the HJ.

The protein localises to the cytoplasm. The catalysed reaction is ATP + H2O = ADP + phosphate + H(+). In terms of biological role, the RuvA-RuvB-RuvC complex processes Holliday junction (HJ) DNA during genetic recombination and DNA repair, while the RuvA-RuvB complex plays an important role in the rescue of blocked DNA replication forks via replication fork reversal (RFR). RuvA specifically binds to HJ cruciform DNA, conferring on it an open structure. The RuvB hexamer acts as an ATP-dependent pump, pulling dsDNA into and through the RuvAB complex. RuvB forms 2 homohexamers on either side of HJ DNA bound by 1 or 2 RuvA tetramers; 4 subunits per hexamer contact DNA at a time. Coordinated motions by a converter formed by DNA-disengaged RuvB subunits stimulates ATP hydrolysis and nucleotide exchange. Immobilization of the converter enables RuvB to convert the ATP-contained energy into a lever motion, pulling 2 nucleotides of DNA out of the RuvA tetramer per ATP hydrolyzed, thus driving DNA branch migration. The RuvB motors rotate together with the DNA substrate, which together with the progressing nucleotide cycle form the mechanistic basis for DNA recombination by continuous HJ branch migration. Branch migration allows RuvC to scan DNA until it finds its consensus sequence, where it cleaves and resolves cruciform DNA. The sequence is that of Holliday junction branch migration complex subunit RuvB from Borreliella afzelii (strain PKo) (Borrelia afzelii).